The sequence spans 468 residues: Factor XIIa inhibitor (468 aa).

The N-terminal stretch at 1-23 (MASRLTPLTLLLLLLLAGDRVTS) is a signal peptide. Residues 27 to 60 (VGPGNLQEGESEGDSQKGGILDGESIQGNEDSPT) are disordered. Asparagine 65, asparagine 176, asparagine 227, and asparagine 326 each carry an N-linked (GlcNAc...) asparagine glycan. 2 disulfide bridges follow: cysteine 97–cysteine 396 and cysteine 104–cysteine 179.

The protein belongs to the serpin family. Post-translationally, N- and O-glycosylated.

It is found in the secreted. May play a potentially crucial role in regulating important physiological pathways including complement activation, blood coagulation, fibrinolysis and the generation of kinins. The polypeptide is Factor XIIa inhibitor (Bos taurus (Bovine)).